The primary structure comprises 380 residues: MLKPKDLCPRAGTRTFLEAMQAGKVHLARFVLDALDRSIIDCRAEQGRTPLMVAVGLPDPALRARFVRLLLEQGAAVNLRDERGRTALSLACERGHLDAVQLLVQFSGDPEAADSAGNSPVMWAAACGHGAVLEFLVRSFRRLGLRLDRTNRAGLTALQLAAARGHGTCVQALTGPWGRAAAAAAARGSNSDSPPGRPAPAASPEHRRPSPRRLPRPLLARFARAAGGHGGEAGSAGKNSGRHRAQGSERPELGRSMSLALGAVTEEEAARLRAGALMALPNSPQSSGTGRWRSQEVLEGAPPTLAQAPIGLSPHPEGGPGSGRLGLRRRSTAPDIPSLVGEAPGPESGPELEANALSVSVPGPNPWQAGTEAVVLRAQR.

ANK repeat units follow at residues Ala-11–Ile-40, Gln-46–Leu-79, Arg-83–Ala-112, Ala-116–Leu-145, and Ala-153–Ala-182. Low complexity-rich tracts occupy residues Ala-181 to Ser-203 and Arg-216 to Ala-226. The tract at residues Ala-181 to Ser-256 is disordered. At Ser-193 the chain carries Phosphoserine. Ser-294 is modified (phosphoserine). The interval Pro-309–Gln-368 is disordered.

This chain is Ankyrin repeat domain-containing protein 63, found in Homo sapiens (Human).